Consider the following 314-residue polypeptide: Glutathione synthetase (314 aa).

Residues 125-311 (EKIAAQLFPQ…IAGQLFDAIE (187 aa)) form the ATP-grasp domain. 151–208 (FVQKQEQAILKPLDGMGGHSIFRSSNGDPNLNVILETLTDGGRTLAIAQRYLQQIIEG) is an ATP binding site. Mg(2+) is bound by residues Glu282 and Asn284.

It belongs to the prokaryotic GSH synthase family. Mg(2+) is required as a cofactor. Mn(2+) serves as cofactor.

It carries out the reaction gamma-L-glutamyl-L-cysteine + glycine + ATP = glutathione + ADP + phosphate + H(+). It participates in sulfur metabolism; glutathione biosynthesis; glutathione from L-cysteine and L-glutamate: step 2/2. The sequence is that of Glutathione synthetase from Xylella fastidiosa (strain Temecula1 / ATCC 700964).